A 523-amino-acid polypeptide reads, in one-letter code: 2,3-bisphosphoglycerate-independent phosphoglycerate mutase (523 aa).

Mn(2+) is bound by residues aspartate 13 and serine 63. The active-site Phosphoserine intermediate is serine 63. Substrate is bound by residues histidine 124, 156 to 157 (RD), arginine 188, arginine 194, 268 to 271 (RSDR), and lysine 341. Positions 408, 412, 449, 450, and 467 each coordinate Mn(2+).

This sequence belongs to the BPG-independent phosphoglycerate mutase family. As to quaternary structure, monomer. It depends on Mn(2+) as a cofactor.

It catalyses the reaction (2R)-2-phosphoglycerate = (2R)-3-phosphoglycerate. It participates in carbohydrate degradation; glycolysis; pyruvate from D-glyceraldehyde 3-phosphate: step 3/5. Its function is as follows. Catalyzes the interconversion of 2-phosphoglycerate and 3-phosphoglycerate. The chain is 2,3-bisphosphoglycerate-independent phosphoglycerate mutase from Salinibacter ruber (strain DSM 13855 / M31).